The primary structure comprises 157 residues: Vitamin K-dependent protein C (157 aa).

The Peptidase S1 domain occupies 1–157 (EKWELDLDIK…GCGRLHNYGV (157 aa)). Residue asparagine 17 is glycosylated (N-linked (GlcNAc...) asparagine). The active-site Charge relay system is the aspartate 26. A glycan (N-linked (GlcNAc...) asparagine) is linked at asparagine 78. 2 disulfide bridges follow: cysteine 96-cysteine 110 and cysteine 121-cysteine 149. The active-site Charge relay system is the serine 125.

It belongs to the peptidase S1 family. Plasma; synthesized in the liver.

Its subcellular location is the secreted. The protein localises to the golgi apparatus. The protein resides in the endoplasmic reticulum. The catalysed reaction is Degradation of blood coagulation factors Va and VIIIa.. Its function is as follows. Protein C is a vitamin K-dependent serine protease that regulates blood coagulation by inactivating factors Va and VIIIa in the presence of calcium ions and phospholipids. Exerts a protective effect on the endothelial cell barrier function. The protein is Vitamin K-dependent protein C (PROC) of Felis catus (Cat).